Here is a 579-residue protein sequence, read N- to C-terminus: Lens epithelium-derived growth factor (579 aa).

A PWWP domain is found at 1–64; the sequence is MSRDFKPGDL…PKDIFPYSEN (64 aa). Disordered stretches follow at residues 62-81, 88-203, 215-397, and 492-579; these read SENK…NEGL, PKVK…EEAA, AAPV…SMDS, and AEQK…FENK. Over residues 94-107 the composition is skewed to polar residues; that stretch reads HQPSHPAVNTSIKE. Basic and acidic residues predominate over residues 153 to 173; the sequence is KEMHSTKEDEEPSEKNSKEGV. The segment covering 184–193 has biased composition (basic residues); it reads VARRGRKRKA. Positions 186–196 match the Nuclear localization signal motif; sequence RRGRKRKAEKQ. Low complexity predominate over residues 215-224; that stretch reads AAPVTVSPKV. Over residues 261–308 the composition is skewed to basic and acidic residues; the sequence is EEEKAKKKGPDEKPKKQGKKDEEGQKEEEKPKKEYDKKDGKKEAEPKR. Acidic residues predominate over residues 321-330; sequence DSEDEGGEEE. A compositionally biased stretch (basic residues) spans 334 to 349; the sequence is KKKGGRSFQSTHRRNI. Positions 347–442 form a coiled coil; it reads RNIMRGQHEK…SMQQAQKHTE (96 aa). Basic and acidic residues-rich tracts occupy residues 352 to 397 and 492 to 522; these read GQHE…SMDS and AEQK…KDQT. Residues 387-464 form an integrase-binding domain (IBD) region; the sequence is MEKKRETSMD…VSQVIMEKST (78 aa). Residues 530-543 show a composition bias toward polar residues; it reads GSETQDTNQSQHNG. The segment covering 544-579 has biased composition (basic and acidic residues); it reads ENAEEKDKLEVASKKKTCGEESELEKPAKESAFENK.

Belongs to the HDGF family.

It is found in the nucleus. Functionally, transcriptional coactivator involved in neuroepithelial stem cell differentiation and neurogenesis. Involved in particular in lens epithelial cell gene regulation and stress responses. May play an important role in lens epithelial to fiber cell terminal differentiation. May play a protective role during stress-induced apoptosis. The polypeptide is Lens epithelium-derived growth factor (PSIP1) (Gallus gallus (Chicken)).